The sequence spans 564 residues: NAD-dependent malic enzyme (564 aa).

The active-site Proton donor is Tyr-102. Arg-155 contacts NAD(+). The active-site Proton acceptor is Lys-173. A divalent metal cation is bound by residues Glu-244, Asp-245, and Asp-268. Residues Asp-268 and Asn-417 each coordinate NAD(+).

The protein belongs to the malic enzymes family. In terms of assembly, homotetramer. It depends on Mg(2+) as a cofactor. Mn(2+) serves as cofactor.

It catalyses the reaction (S)-malate + NAD(+) = pyruvate + CO2 + NADH. The catalysed reaction is oxaloacetate + H(+) = pyruvate + CO2. The polypeptide is NAD-dependent malic enzyme (Pseudomonas aeruginosa (strain ATCC 15692 / DSM 22644 / CIP 104116 / JCM 14847 / LMG 12228 / 1C / PRS 101 / PAO1)).